The following is a 271-amino-acid chain: Tryptophan synthase alpha chain (271 aa).

Residues glutamate 49 and aspartate 60 each act as proton acceptor in the active site.

This sequence belongs to the TrpA family. As to quaternary structure, tetramer of two alpha and two beta chains.

The enzyme catalyses (1S,2R)-1-C-(indol-3-yl)glycerol 3-phosphate + L-serine = D-glyceraldehyde 3-phosphate + L-tryptophan + H2O. The protein operates within amino-acid biosynthesis; L-tryptophan biosynthesis; L-tryptophan from chorismate: step 5/5. Its function is as follows. The alpha subunit is responsible for the aldol cleavage of indoleglycerol phosphate to indole and glyceraldehyde 3-phosphate. The polypeptide is Tryptophan synthase alpha chain (Burkholderia ambifaria (strain MC40-6)).